The following is a 121-amino-acid chain: UPF0102 protein Strop_1320 (121 aa).

The protein belongs to the UPF0102 family.

In Salinispora tropica (strain ATCC BAA-916 / DSM 44818 / JCM 13857 / NBRC 105044 / CNB-440), this protein is UPF0102 protein Strop_1320.